We begin with the raw amino-acid sequence, 1915 residues long: Protein TIC 214 (1915 aa).

6 consecutive transmembrane segments (helical) span residues 18 to 38, 64 to 84, 90 to 110, 126 to 146, 174 to 194, and 230 to 250; these read IINS…FSIG, FITG…HLAL, ITVL…HKYF, LNIQ…HFIL, VGWL…LIWI, and IFSI…PSTL. Disordered stretches follow at residues 260–319 and 1566–1631; these read KMKQ…EIRV and NKNI…GSVL. A compositionally biased stretch (acidic residues) spans 267-277; sequence SEEETDVEIET. A compositionally biased stretch (basic and acidic residues) spans 279-288; it reads SETKETKEEQ. A compositionally biased stretch (acidic residues) spans 304–315; that stretch reads EKEDPDKIDETE. The span at 1587–1601 shows a compositional bias: basic and acidic residues; the sequence is KSLELENRNQEEKES. The span at 1602–1631 shows a compositional bias: polar residues; the sequence is SSQGDLGSNAQNQGNLGPNAQNQGNLGSVL.

Belongs to the TIC214 family. As to quaternary structure, part of the Tic complex.

Its subcellular location is the plastid. The protein localises to the chloroplast inner membrane. Its function is as follows. Involved in protein precursor import into chloroplasts. May be part of an intermediate translocation complex acting as a protein-conducting channel at the inner envelope. The sequence is that of Protein TIC 214 from Platanus occidentalis (Sycamore).